The sequence spans 852 residues: MVDAVVTVFLEKTLNILEEKGRTVSDYRKQLEDLQSELKYMQSFLKDAERQKRTNETLRTLVADLRELVYEAEDILVDCQLADGDDGNEQRSSNAWLSRLHPARVPLQYKKSKRLQEINERITKIKSQVEPYFEFITPSNVGRDNGTDRWSSPVYDHTQVVGLEGDKRKIKEWLFRSNDSQLLIMAFVGMGGLGKTTIAQEVFNDKEIEHRFERRIWVSVSQTFTEEQIMRSILRNLGDASVGDDIGTLLRKIQQYLLGKRYLIVMDDVWDKNLSWWDKIYQGLPRGQGGSVIVTTRSESVAKRVQARDDKTHRPELLSPDNSWLLFCNVAFAANDGTCERPELEDVGKEIVTKCKGLPLTIKAVGGLLLCKDHVYHEWRRIAEHFQDELRGNTSETDNVMSSLQLSYDELPSHLKSCILTLSLYPEDCVIPKQQLVHGWIGEGFVMWRNGRSATESGEDCFSGLTNRCLIEVVDKTYSGTIITCKIHDMVRDLVIDIAKKDSFSNPEGLNCRHLGISGNFDEKQIKVNHKLRGVVSTTKTGEVNKLNSDLAKKFTDCKYLRVLDISKSIFDAPLSEILDEIASLQHLACLSLSNTHPLIQFPRSMEDLHNLQILDASYCQNLKQLQPCIVLFKKLLVLDMTNCGSLECFPKGIGSLVKLEVLLGFKPARSNNGCKLSEVKNLTNLRKLGLSLTRGDQIEEEELDSLINLSKLMSISINCYDSYGDDLITKIDALTPPHQLHELSLQFYPGKSSPSWLSPHKLPMLRYMSICSGNLVKMQEPFWGNENTHWRIEGLMLSSLSDLDMDWEVLQQSMPYLRTVTANWCPELESFAIEDVGFRGGVWMKTPLHRT.

The stretch at 17–68 (LEEKGRTVSDYRKQLEDLQSELKYMQSFLKDAERQKRTNETLRTLVADLREL) forms a coiled coil. Residues Arg-149, Val-161, 189-196 (GMGGLGKT), Arg-297, and Lys-363 each bind ADP. An NB-ARC domain is found at 164 to 410 (EGDKRKIKEW…MSSLQLSYDE (247 aa)). LRR repeat units follow at residues 558-581 (CKYLRVLDISKSIFDAPLSEILDE), 585-609 (LQHLACLSLSNTHPLIQFPRSMEDL), 633-657 (FKKLLVLDMTNCGSLECFPKGIGSL), 683-706 (LTNLRKLGLSLTRGDQIEEEELDS), 763-786 (LPMLRYMSICSGNLVKMQEPFWGN), and 798-824 (LSSLSDLDMDWEVLQQSMPYLRTVTAN).

It belongs to the disease resistance NB-LRR family. RPP13 subfamily. Interacts with ZED1/ZRK5. Component of a stable high-order oligomeric complex made of RKS1 and RPP13L4/ZAR1 which recruits ZED1-related kinases (e.g. uridylylated PBL2 and acetylated ZED1/ZRK5) in the presence of ATP and pathogenic bacteria type III secreted effector (T3SE) proteins (e.g. Pseudomonas syringae HopZ1a and HopF2a and Xanthomonas campestris pv. campestris (Xcc) XopAC/AvrAC) to form a wheel-like pentameric resistosome; this complex triggers immunity toward pathogenic bacteria (e.g. X.campestris and P.syringae), especially in vascular tissues. Interacts with RKS1, ZED1/ZRK5, ZRK3, ZRK6 and ZRK15.

The protein localises to the cell membrane. It localises to the nucleus. Exhibits autoinhibition activity. Its function is as follows. CC-NB-LRR receptor-like protein required for recognition of pathogenic bacteria type III effectors (T3E) such as Pseudomonas syringae HopZ1a and HopF2a and Xanthomonas campestris pv. campestris (Xcc) XopAC/AvrAC; this recognition requires ZED1-related kinases (e.g. PBL2, ZRK3 and ZED1/ZRK5). Confers allele-specific recognition and virulence attenuation of HopZ1a. Immunity mediated by RPP13L4/ZAR1 is independent of several genes required by other resistance protein signaling pathways such as NDR1 and RAR1. Together with ZED1/ZRK5, involved in the regulation of the ambient temperature-sensitive intersection of growth and immune response in the absence of pathogens. The polypeptide is Disease resistance RPP13-like protein 4 (RPP13L4) (Arabidopsis thaliana (Mouse-ear cress)).